A 131-amino-acid polypeptide reads, in one-letter code: Large ribosomal subunit protein bL17 (131 aa).

The protein belongs to the bacterial ribosomal protein bL17 family. Part of the 50S ribosomal subunit. Contacts protein L32.

The protein is Large ribosomal subunit protein bL17 of Burkholderia multivorans (strain ATCC 17616 / 249).